A 420-amino-acid polypeptide reads, in one-letter code: tRNA (guanine-N(7)-)-methyltransferase non-catalytic subunit TRM82 (420 aa).

Residues Lys-59–Ser-68 show a composition bias toward basic and acidic residues. The interval Lys-59–Gly-82 is disordered. WD repeat units lie at residues Pro-87 to Leu-127, Gly-179 to Asn-220, Gly-224 to Glu-266, and Ser-340 to Asn-379.

It belongs to the WD repeat TRM82 family. In terms of assembly, forms a heterodimer with the catalytic subunit TRM8.

It is found in the nucleus. Its pathway is tRNA modification; N(7)-methylguanine-tRNA biosynthesis. In terms of biological role, required for the formation of N(7)-methylguanine at position 46 (m7G46) in tRNA. In the complex, it is required to stabilize and induce conformational changes of the catalytic subunit. The protein is tRNA (guanine-N(7)-)-methyltransferase non-catalytic subunit TRM82 of Meyerozyma guilliermondii (strain ATCC 6260 / CBS 566 / DSM 6381 / JCM 1539 / NBRC 10279 / NRRL Y-324) (Yeast).